A 315-amino-acid polypeptide reads, in one-letter code: Mitochondrial outer membrane import complex protein METAXIN (315 aa).

At Met1 the chain carries N-acetylmethionine. Positions 157–181 (ENAEQREKQIYKRASEAYEALSTRL) form a coiled coil. A helical transmembrane segment spans residues 195–215 (LDAFLLSHILFIIQALPVTSV). The tract at residues 240 to 277 (ASSSSPSPPLHSFPSSFPRKSSKPKSKPKVEKTEEEKK) is disordered. A compositionally biased stretch (basic and acidic residues) spans 267 to 277 (PKVEKTEEEKK). The helical transmembrane segment at 284–304 (FFLAAQFLAVVIYVSVMGGGS) threads the bilayer.

Belongs to the metaxin family. As to quaternary structure, part of a high molecular weight complex that is distinct from the TOM complex. Interacts with a variety of mitochondrial precursor proteins. As to expression, expressed in roots, young cotyledons, flowers and leaves.

It is found in the mitochondrion inner membrane. The protein localises to the mitochondrion outer membrane. Its function is as follows. Involved in transport of proteins into the mitochondrion. The chain is Mitochondrial outer membrane import complex protein METAXIN (MTX1) from Arabidopsis thaliana (Mouse-ear cress).